A 201-amino-acid chain; its full sequence is Large ribosomal subunit protein bL25 (201 aa).

Belongs to the bacterial ribosomal protein bL25 family. CTC subfamily. Part of the 50S ribosomal subunit; part of the 5S rRNA/L5/L18/L25 subcomplex. Contacts the 5S rRNA. Binds to the 5S rRNA independently of L5 and L18.

Functionally, this is one of the proteins that binds to the 5S RNA in the ribosome where it forms part of the central protuberance. The chain is Large ribosomal subunit protein bL25 from Burkholderia cenocepacia (strain HI2424).